The chain runs to 281 residues: Para-Rep C1 (281 aa).

A CRESS-DNA virus Rep endonuclease domain is found at 3–97 (TLQGTFWCFT…VAGPWTYGEL (95 aa)). Positions 10-13 (CFTL) match the RCR-1 motif. E36 and H42 together coordinate a divalent metal cation. The RCR-2 signature appears at 42–44 (HLQ). The Nuclear localization signal signature appears at 51 to 71 (KRSTLKMMKELLPGAHLEVSK). The For DNA cleavage activity role is filled by Y80. The short motif at 80–83 (YAMK) is the RCR-3 element. E85 provides a ligand contact to a divalent metal cation. The Nuclear localization signal signature appears at 97–103 (LLKKGSN). 173-181 (GPQGGEGKT) contributes to the ATP binding site.

Belongs to the nanoviridea/circoviridae replication-associated protein family. As to quaternary structure, homooligomer (Potential). Rep binds to repeated DNA motifs (iterons). Requires Mg(2+) as cofactor. It depends on Mn(2+) as a cofactor.

Its subcellular location is the host nucleus. The enzyme catalyses ATP + H2O = ADP + phosphate + H(+). Its function is as follows. Initiates and terminates the replication only of its own subviral DNA molecule. The closed circular ssDNA genome is first converted to a superhelical dsDNA. Rep binds a specific hairpin at the genome origin of replication. Introduces an endonucleolytic nick within the intergenic region of the genome, thereby initiating the rolling circle replication (RCR). Following cleavage, binds covalently to the 5'-phosphate of DNA as a tyrosyl ester. The cleavage gives rise to a free 3'-OH that serves as a primer for the cellular DNA polymerase. The polymerase synthesizes the (+) strand DNA by rolling circle mechanism. After one round of replication, a Rep-catalyzed nucleotidyl transfer reaction releases a circular single-stranded virus genome, thereby terminating the replication. Displays origin-specific DNA cleavage, nucleotidyl transferase, ATPase and helicase activities. The polypeptide is Para-Rep C1 (C1) (Milk vetch dwarf C1 alphasatellite (MVDC1A)).